The sequence spans 456 residues: Septin-10 (456 aa).

The Septin-type G domain occupies Gln-40 to Glu-306. The segment at Gly-50–Ser-57 is G1 motif. Residues Gly-50 to Ser-57, Gly-105, Lys-186 to Glu-194, Gly-240, and Arg-255 contribute to the GTP site. Residues Asn-102–Gly-105 form a G3 motif region. A G4 motif region spans residues Ala-185–Asp-188. Position 418 is a phosphoserine (Ser-418).

It belongs to the TRAFAC class TrmE-Era-EngA-EngB-Septin-like GTPase superfamily. Septin GTPase family. In terms of assembly, septins polymerize into heterooligomeric protein complexes that form filaments, and can associate with cellular membranes, actin filaments and microtubules. GTPase activity is required for filament formation. Interacts with ADGB. Proteolytically cleaved in vitro in a calmodulin-dependent manner.

It localises to the cytoplasm. It is found in the cytoskeleton. The protein localises to the cell projection. Its subcellular location is the cilium. The protein resides in the flagellum. Functionally, filament-forming cytoskeletal GTPase. May play a role in cytokinesis (Potential). This Rattus norvegicus (Rat) protein is Septin-10.